Consider the following 334-residue polypeptide: uncharacterized protein (334 aa).

The next 2 membrane-spanning stretches (helical) occupy residues 1–21 and 46–66; these read MFRLLLICITFLALYFGFTFI and ILGLLLLVSCFIIIRFLIIII.

The protein resides in the cell membrane. This is an uncharacterized protein from Rickettsia prowazekii (strain Madrid E).